We begin with the raw amino-acid sequence, 137 residues long: Cytochrome c-type biogenesis protein CcmE (137 aa).

The Cytoplasmic portion of the chain corresponds to 1–8 (MQKGAKNR). A helical; Signal-anchor for type II membrane protein membrane pass occupies residues 9 to 29 (LITIIICFCSAVIGVSIILYN). The Periplasmic portion of the chain corresponds to 30–137 (LEKSIVFFVP…NTVIPAKAGI (108 aa)). Heme contacts are provided by His-120 and Tyr-124.

This sequence belongs to the CcmE/CycJ family.

The protein localises to the cell inner membrane. Functionally, heme chaperone required for the biogenesis of c-type cytochromes. Transiently binds heme delivered by CcmC and transfers the heme to apo-cytochromes in a process facilitated by CcmF and CcmH. The chain is Cytochrome c-type biogenesis protein CcmE from Rickettsia bellii (strain OSU 85-389).